Reading from the N-terminus, the 481-residue chain is Argininosuccinate synthase (481 aa).

ATP-binding positions include 17–25 (AFSGGLDTS) and Ala-43. L-citrulline is bound at residue Tyr-99. Residues Gly-129 and Thr-131 each contribute to the ATP site. 3 residues coordinate L-aspartate: Thr-131, Asn-135, and Asp-136. Asn-135 is a binding site for L-citrulline. Position 136 (Asp-136) interacts with ATP. L-citrulline-binding residues include Arg-139 and Ser-192. ATP is bound at residue Asp-194. 3 residues coordinate L-citrulline: Thr-201, Glu-203, and Glu-280.

Belongs to the argininosuccinate synthase family. Type 2 subfamily. In terms of assembly, homotetramer.

The protein localises to the cytoplasm. The enzyme catalyses L-citrulline + L-aspartate + ATP = 2-(N(omega)-L-arginino)succinate + AMP + diphosphate + H(+). Its pathway is amino-acid biosynthesis; L-arginine biosynthesis; L-arginine from L-ornithine and carbamoyl phosphate: step 2/3. This is Argininosuccinate synthase (argG) from Streptomyces coelicolor (strain ATCC BAA-471 / A3(2) / M145).